Consider the following 808-residue polypeptide: MLIVRKPKKKKDEIEIVKVGGKIEDGIEVKNNQKIFANYKKVGDKYKLYRCRVGDKLIQPSKVLELLKSDKIFILKENEEEIEEVLKSYNLKFDYIELCPFCLLKNIYKRLTRNNRCRYGNLEICINCGINEIKEEVKISEEFIEKFLKRFKDVDKVLSLLRIRNPLDKPELTRYDIITGSEEDKIENYKIDELDIPEELKEIIKSRGIEELLPVQTLSVKAGLLNGDDLLIISATSSGKTLIGELAGIKNLIKTGKKFLFLVPLVALANQKYLEFKERYEKLGFKVSLRVGLGRIGKKVDVETSLDADIIVGTYEGIDYLIRTKRLKDIGTVVIDEIHSLNLEERGARLDGLIGRLRFLFKEAQKIYLSATIGNPKELAKQLNAKLVLYNGRPVPLERHIIFCKNDFAKLNIIKEIVKREWQNISKFGYRGQCLIFTYSRKRAEYLAKALKSKGIKAEFYHGGMEYIKRRKVEDDFANQKIQCVVTTAALSAGVDFPASTVILESLAMGADWLNPAEFQQMCGRAGRKGMHEIGKVYLLVEIGKKYHAKMENTEDEVAFKLLNAVPEDVKVEYNEDEEEEQILATISAGITNRYDIDRVPYIGRAFSLNKILSNLESYGMIKANNDVKLTNYGSAVAISFLYPKVAEKIKEGIIENKEIIKLITEIMPFENVYLSNNLKIKLSKILNINVPSRFFDALEVIREGMEKIKDKKLKEDLTLIIMEFEGVEVEEKILEMIINLRISGKTPGQISKTLYEEFKIQTYSGDIYYYLEQLLNLLDATERIARIFNKRYAEKVKELKEKIENPK.

The short motif at 189–217 (YKIDELDIPEELKEIIKSRGIEELLPVQT) is the Q motif element. Residues 221–391 (KAGLLNGDDL…QLNAKLVLYN (171 aa)) enclose the Helicase ATP-binding domain. Residue 234 to 241 (SATSSGKT) coordinates ATP. Residues 336-339 (DEIH) carry the DEIH box motif. The Helicase C-terminal domain occupies 396–585 (PLERHIIFCK…EDEEEEQILA (190 aa)).

The protein belongs to the DEAD box helicase family.

In Methanocaldococcus jannaschii (strain ATCC 43067 / DSM 2661 / JAL-1 / JCM 10045 / NBRC 100440) (Methanococcus jannaschii), this protein is Probable ATP-dependent helicase MJ1401.